A 327-amino-acid polypeptide reads, in one-letter code: uncharacterized protein (327 aa).

One can recognise an S4 RNA-binding domain in the interval 32–105 (VRLDKWLAEQ…IPLDILYEDE (74 aa)). Aspartate 156 is an active-site residue.

This sequence belongs to the pseudouridine synthase RluA family.

It catalyses the reaction a uridine in RNA = a pseudouridine in RNA. This is an uncharacterized protein from Synechocystis sp. (strain ATCC 27184 / PCC 6803 / Kazusa).